Reading from the N-terminus, the 458-residue chain is Flavonol 3-O-glucosyltransferase UGT76E12 (458 aa).

The active-site Proton acceptor is His25. His25 is a binding site for an anthocyanidin. Catalysis depends on Asp118, which acts as the Charge relay. UDP-alpha-D-glucose is bound by residues Thr140, Ala339, Gln341, His356, Trp359, Asn360, Ser361, and Glu364. Gly379 provides a ligand contact to an anthocyanidin. UDP-alpha-D-glucose-binding residues include Asp380 and Gln381.

Belongs to the UDP-glycosyltransferase family.

The enzyme catalyses a flavonol + UDP-alpha-D-glucose = a flavonol 3-O-beta-D-glucoside + UDP + H(+). It catalyses the reaction a 7-O-hydroxy-flavonol + UDP-alpha-D-glucose = a flavonol 7-O-beta-D-glucoside + UDP + H(+). Possesses quercetin 3-O-glucosyltransferase and 7-O-glucosyltransferase activities in vitro. This is Flavonol 3-O-glucosyltransferase UGT76E12 from Arabidopsis thaliana (Mouse-ear cress).